Reading from the N-terminus, the 204-residue chain is Large ribosomal subunit protein uL4 (204 aa).

Positions 49–76 are disordered; the sequence is KTKGISDVSGTTAKPYGQKRTGRARQGS.

Belongs to the universal ribosomal protein uL4 family. In terms of assembly, part of the 50S ribosomal subunit.

Its function is as follows. One of the primary rRNA binding proteins, this protein initially binds near the 5'-end of the 23S rRNA. It is important during the early stages of 50S assembly. It makes multiple contacts with different domains of the 23S rRNA in the assembled 50S subunit and ribosome. In terms of biological role, forms part of the polypeptide exit tunnel. This chain is Large ribosomal subunit protein uL4, found in Wolbachia pipientis wMel.